Consider the following 398-residue polypeptide: Succinate--CoA ligase [ADP-forming] subunit beta (398 aa).

One can recognise an ATP-grasp domain in the interval 9-254 (KRLLHTYGAP…LTEEDPKEIE (246 aa)). ATP-binding positions include Lys46, 53-55 (GRG), Glu109, Ala112, and Glu117. 2 residues coordinate Mg(2+): Asn209 and Asp223. Residues Asn274 and 331 to 333 (GIM) each bind substrate.

This sequence belongs to the succinate/malate CoA ligase beta subunit family. Heterotetramer of two alpha and two beta subunits. It depends on Mg(2+) as a cofactor.

It catalyses the reaction succinate + ATP + CoA = succinyl-CoA + ADP + phosphate. The catalysed reaction is GTP + succinate + CoA = succinyl-CoA + GDP + phosphate. It functions in the pathway carbohydrate metabolism; tricarboxylic acid cycle; succinate from succinyl-CoA (ligase route): step 1/1. Succinyl-CoA synthetase functions in the citric acid cycle (TCA), coupling the hydrolysis of succinyl-CoA to the synthesis of either ATP or GTP and thus represents the only step of substrate-level phosphorylation in the TCA. The beta subunit provides nucleotide specificity of the enzyme and binds the substrate succinate, while the binding sites for coenzyme A and phosphate are found in the alpha subunit. The protein is Succinate--CoA ligase [ADP-forming] subunit beta of Brucella abortus (strain S19).